The sequence spans 342 residues: uncharacterized protein (342 aa).

A substrate-binding site is contributed by Arg-69. The active-site Proton donor is the His-176. Residue Asp-240 participates in substrate binding.

The protein belongs to the aldose epimerase family.

This is an uncharacterized protein from Saccharomyces cerevisiae (strain ATCC 204508 / S288c) (Baker's yeast).